The primary structure comprises 1910 residues: Endoribonuclease dcr-1 (1910 aa).

The Helicase ATP-binding domain occupies Leu-20–Glu-201. Residue Leu-33 to Thr-40 participates in ATP binding. Positions Asp-145–His-148 match the DEAH box motif. The Helicase C-terminal domain maps to Glu-371–Ser-542. The Dicer dsRNA-binding fold domain maps to Ala-571 to Lys-667. Residues Tyr-845–Pro-1003 form the PAZ domain. Disordered stretches follow at residues Arg-951–Ser-988, Thr-1227–Thr-1248, and Leu-1272–Phe-1309. Polar residues-rich tracts occupy residues Ile-970–Ser-988 and Thr-1227–Lys-1245. Positions Lys-1245–Lys-1280 form a coiled coil. Positions Leu-1272–Asp-1286 are enriched in basic and acidic residues. Over residues Val-1288–Asn-1304 the composition is skewed to acidic residues. RNase III domains are found at residues Val-1381–Gly-1589 and Phe-1643–Gly-1805. Residues Glu-1682, Asp-1791, and Glu-1794 each coordinate Mg(2+). The 64-residue stretch at Ser-1833–Gln-1896 folds into the DRBM domain.

This sequence belongs to the helicase family. Dicer subfamily. In terms of assembly, component of the ERI/DICER complex at least composed of dcr-1, rrf-3 and eri-1. Interacts with pir-1. Requires Mg(2+) as cofactor. Mn(2+) serves as cofactor.

In terms of biological role, component of the ERI/DICER complex which is involved in processing amplified double-stranded RNA (dsRNA) intermediates during small-RNA-mediated gene-silencing or RNA interference (RNAi). Involved in cleaving dsRNA in the RNAi pathway. It produces 21 to 23 bp dsRNAs (siRNAs) which target the selective destruction of homologous RNAs. Seems to process the precursor of the small temporal RNA let-7 which is involved in developmental timing. Required for avoidance behavior induced by small RNAs derived from pathogenic bacteria such as P.aeruginosa. Involved in innate immunity through its role in small RNA processing. TDCR-1 acts as a deoxyribonuclease (DNase) initiating DNA fragmentation during apoptosis, upstream of nucleases cps-6, crn-2 and nuc-1. The sequence is that of Endoribonuclease dcr-1 from Caenorhabditis elegans.